Reading from the N-terminus, the 997-residue chain is Mannuronan C5-epimerase AlgE2 (997 aa).

PbH1 repeat units lie at residues 133–155, 157–179, 180–202, 204–226, 257–279, 280–315, and 320–359; these read DRDVTLERVEIREMSGYGFDPHE, TINLTIRDSVAHDNGLDGFVADF, QIGGVFENNVSYNNDRHGFNIVT, TNDFVLSNNVAYGNGGAGLVVQR, AHDVTLQNAEIYGNGLYGVRVYG, AEDVQILDNYIHDNSQNGSYAEILLQSYDDTAGVSG, and TTGTWIEGNTIVGSANSTYGIQERDDGTDYSSLYANSVSN. 10 Hemolysin-type calcium-binding repeats span residues 388–403, 406–422, 424–439, 557–573, 574–591, 696–711, 713–730, 828–839, 846–862, and 864–880; these read GTAGNDTLGGSDAHET, GLDGNDRLNGGAGNDIL, GGAGRDNLTGGAGADL, GHAGNDTLDGGAGDDIL, VGGAGRDSLTGGAGADVF, GSAGNDSLQGTAADEV, HGGGGRDTLAGGAGADVF, GGDGNDTLSGSS, GGVGNDSLDGGAGNDIL, and GGAGRDTLSGGSGSDIF.

This sequence belongs to the D-mannuronate C5-epimerase family. The cofactor is Ca(2+).

Its subcellular location is the secreted. It carries out the reaction [(1-&gt;4)-beta-D-mannuronosyl](n) = [alginate](n). The protein operates within glycan biosynthesis; alginate biosynthesis. With respect to regulation, inhibited by zinc. In terms of biological role, converts beta-D-mannuronic acid (M) to alpha-L-guluronic acid (G), producing a polymer with gel-forming capacity, required for the formation of the cyst coat. This is Mannuronan C5-epimerase AlgE2 from Azotobacter vinelandii.